We begin with the raw amino-acid sequence, 342 residues long: Nicotinate-nucleotide--dimethylbenzimidazole phosphoribosyltransferase (342 aa).

The active-site Proton acceptor is glutamate 311.

The protein belongs to the CobT family.

It catalyses the reaction 5,6-dimethylbenzimidazole + nicotinate beta-D-ribonucleotide = alpha-ribazole 5'-phosphate + nicotinate + H(+). Its pathway is nucleoside biosynthesis; alpha-ribazole biosynthesis; alpha-ribazole from 5,6-dimethylbenzimidazole: step 1/2. Functionally, catalyzes the synthesis of alpha-ribazole-5'-phosphate from nicotinate mononucleotide (NAMN) and 5,6-dimethylbenzimidazole (DMB). This is Nicotinate-nucleotide--dimethylbenzimidazole phosphoribosyltransferase from Vibrio atlanticus (strain LGP32) (Vibrio splendidus (strain Mel32)).